The following is a 315-amino-acid chain: Nucleotide-binding protein PsycPRwf_2129 (315 aa).

An ATP-binding site is contributed by 29–36 (GRSGSGKT). 79–82 (DIRT) provides a ligand contact to GTP.

Belongs to the RapZ-like family.

Its function is as follows. Displays ATPase and GTPase activities. The protein is Nucleotide-binding protein PsycPRwf_2129 of Psychrobacter sp. (strain PRwf-1).